The following is a 271-amino-acid chain: Phosphatidylglycerol--prolipoprotein diacylglyceryl transferase (271 aa).

7 helical membrane passes run 18-38 (IFGL…LVAL), 60-80 (YFIW…ILIY), 103-123 (FVGI…IATY), 137-157 (LDLV…GNFL), 181-201 (PSQL…LLLI), 209-229 (GELI…CEFF), and 236-256 (IGFV…MFLL). Residue R152 coordinates a 1,2-diacyl-sn-glycero-3-phospho-(1'-sn-glycerol).

It belongs to the Lgt family.

It localises to the cell inner membrane. It catalyses the reaction L-cysteinyl-[prolipoprotein] + a 1,2-diacyl-sn-glycero-3-phospho-(1'-sn-glycerol) = an S-1,2-diacyl-sn-glyceryl-L-cysteinyl-[prolipoprotein] + sn-glycerol 1-phosphate + H(+). The protein operates within protein modification; lipoprotein biosynthesis (diacylglyceryl transfer). In terms of biological role, catalyzes the transfer of the diacylglyceryl group from phosphatidylglycerol to the sulfhydryl group of the N-terminal cysteine of a prolipoprotein, the first step in the formation of mature lipoproteins. The protein is Phosphatidylglycerol--prolipoprotein diacylglyceryl transferase of Campylobacter lari (strain RM2100 / D67 / ATCC BAA-1060).